Consider the following 904-residue polypeptide: Exo-beta-D-glucosaminidase (904 aa).

The signal sequence occupies residues 1-32 (MFHRPASVRRFVTTAVALGLLSTLSTGARAGA). A disordered region spans residues 28–49 (ARAGARTHEPPPRPTTVSSTAG). Catalysis depends on D476, which acts as the Proton donor. The active-site Nucleophile is E545. Over residues 813-828 (STTAGTDGASTTTVTV) the composition is skewed to low complexity. Residues 813–833 (STTAGTDGASTTTVTVRNTGS) form a disordered region.

Belongs to the glycosyl hydrolase 2 family. Monomer.

The protein localises to the secreted. The catalysed reaction is Hydrolysis of chitosan or chitosan oligosaccharides to remove successive D-glucosamine residues from the non-reducing termini.. In terms of biological role, hydrolyzes chitosan and chitooligosaccharides with retention of anomeric configuration. Has no beta-mannosidase activity. This Streptomyces avermitilis (strain ATCC 31267 / DSM 46492 / JCM 5070 / NBRC 14893 / NCIMB 12804 / NRRL 8165 / MA-4680) protein is Exo-beta-D-glucosaminidase.